We begin with the raw amino-acid sequence, 249 residues long: Acidic leucine-rich nuclear phosphoprotein 32 family member A (249 aa).

Phosphothreonine is present on T15. At S17 the chain carries Phosphoserine. LRR repeat units follow at residues 18–38 (DVKE…EGLT), 43–64 (ELEF…PKLN), 65–87 (KLKK…AEKC), and 89–110 (NLTH…EPLK). The LRRCT domain occupies 123–161 (CEVTNLNDYRENVFKLLPQLTYLDGYDRDDKEAPDSDAE). The segment covering 147–156 (GYDRDDKEAP) has biased composition (basic and acidic residues). Positions 147–249 (GYDRDDKEAP…EPEDEGEDDD (103 aa)) are disordered. The tract at residues 150–174 (RDDKEAPDSDAEGYVEGLDDDEEDE) is necessary for tumor-suppressive function. Over residues 157–230 (DSDAEGYVEG…DEEDEEELGE (74 aa)) the composition is skewed to acidic residues. S158 and S204 each carry phosphoserine. An interaction with E4F1 region spans residues 165-249 (EGLDDDEEDE…EPEDEGEDDD (85 aa)).

Belongs to the ANP32 family. In terms of assembly, component of the SET complex, composed of at least ANP32A, APEX1, HMGB2, NME1, SET and TREX1. Directly interacts with SET. Interacts with ATXN1/SCA1. Interacts with MAP1B. Interacts with ELAVL1. Part of the INHAT (inhibitor of histone acetyltransferases) complex. Interacts with E4F1. In terms of processing, the N-terminus is blocked. Post-translationally, phosphorylated on serine residues, at least in part by casein kinase 2/CK2. Some glutamate residues are glycylated by TTLL8. This modification occurs exclusively on glutamate residues and results in a glycine chain on the gamma-carboxyl group. Widely distributed in the central nervous system, with an abundant expression in the cerebellum.

The protein localises to the nucleus. Its subcellular location is the cytoplasm. It is found in the endoplasmic reticulum. Functionally, multifunctional protein that is involved in the regulation of many processes including tumor suppression, apoptosis, cell cycle progression or transcription. Promotes apoptosis by favouring the activation of caspase-9/CASP9 and allowing apoptosome formation. In addition, plays a role in the modulation of histone acetylation and transcription as part of the INHAT (inhibitor of histone acetyltransferases) complex. Inhibits the histone-acetyltranferase activity of EP300/CREBBP (CREB-binding protein) and EP300/CREBBP-associated factor by histone masking. Preferentially binds to unmodified histone H3 and sterically inhibiting its acetylation and phosphorylation leading to cell growth inhibition. Participates in other biochemical processes such as regulation of mRNA nuclear-to-cytoplasmic translocation and stability by its association with ELAVL1 (Hu-antigen R). Plays a role in E4F1-mediated transcriptional repression as well as inhibition of protein phosphatase 2A. The polypeptide is Acidic leucine-rich nuclear phosphoprotein 32 family member A (ANP32A) (Bos taurus (Bovine)).